A 190-amino-acid chain; its full sequence is GTP cyclohydrolase 1 (190 aa).

Cys-79, His-82, and Cys-151 together coordinate Zn(2+).

It belongs to the GTP cyclohydrolase I family. In terms of assembly, toroid-shaped homodecamer, composed of two pentamers of five dimers.

The catalysed reaction is GTP + H2O = 7,8-dihydroneopterin 3'-triphosphate + formate + H(+). It participates in cofactor biosynthesis; 7,8-dihydroneopterin triphosphate biosynthesis; 7,8-dihydroneopterin triphosphate from GTP: step 1/1. The chain is GTP cyclohydrolase 1 from Clostridioides difficile (strain 630) (Peptoclostridium difficile).